A 275-amino-acid chain; its full sequence is Lectin (275 aa).

A signal peptide spans 1–30 (MASLQTQMISFYAIFLSILLTTILFFKVNS). Mn(2+) contacts are provided by E149 and D151. Ca(2+) contacts are provided by D151, F153, N155, and D159. Residues D159 and H166 each coordinate Mn(2+). N-linked (GlcNAc...) asparagine glycosylation is present at N217.

It belongs to the leguminous lectin family. In terms of assembly, tetramer of two alpha and two beta chains.

D-mannose specific lectin. The polypeptide is Lectin (LECA) (Pisum sativum (Garden pea)).